The following is a 277-amino-acid chain: 2-dehydro-3-deoxyphosphooctonate aldolase (277 aa).

Belongs to the KdsA family.

It localises to the cytoplasm. It catalyses the reaction D-arabinose 5-phosphate + phosphoenolpyruvate + H2O = 3-deoxy-alpha-D-manno-2-octulosonate-8-phosphate + phosphate. The protein operates within carbohydrate biosynthesis; 3-deoxy-D-manno-octulosonate biosynthesis; 3-deoxy-D-manno-octulosonate from D-ribulose 5-phosphate: step 2/3. Its pathway is bacterial outer membrane biogenesis; lipopolysaccharide biosynthesis. The chain is 2-dehydro-3-deoxyphosphooctonate aldolase from Vesicomyosocius okutanii subsp. Calyptogena okutanii (strain HA).